Consider the following 350-residue polypeptide: GTPase Obg (350 aa).

In terms of domain architecture, Obg spans 1–159 (MKLVDEAEIE…RTLKLELKLL (159 aa)). The disordered stretch occupies residues 127–147 (NMHFKSSTNRSPRQALPGEPG). The region spanning 160 to 337 (ADVGLLGFPN…IMSRIMAFFD (178 aa)) is the OBG-type G domain. GTP-binding positions include 166 to 173 (GFPNAGKS), 191 to 195 (FTTLY), 213 to 216 (DIPG), 287 to 290 (NKAD), and 318 to 320 (SAL). Positions 173 and 193 each coordinate Mg(2+).

Belongs to the TRAFAC class OBG-HflX-like GTPase superfamily. OBG GTPase family. In terms of assembly, monomer. Requires Mg(2+) as cofactor.

It localises to the cytoplasm. Functionally, an essential GTPase which binds GTP, GDP and possibly (p)ppGpp with moderate affinity, with high nucleotide exchange rates and a fairly low GTP hydrolysis rate. Plays a role in control of the cell cycle, stress response, ribosome biogenesis and in those bacteria that undergo differentiation, in morphogenesis control. This is GTPase Obg from Stenotrophomonas maltophilia (strain R551-3).